The following is a 263-amino-acid chain: Leukocyte-associated immunoglobulin-like receptor 1 (263 aa).

The first 21 residues, 1 to 21 (MSLHPVILLVLVLCLGWKINT), serve as a signal peptide directing secretion. The Extracellular portion of the chain corresponds to 22–144 (QEGSLPDITI…TSWLKTYSIY (123 aa)). The Ig-like C2-type domain maps to 27–115 (PDITIFPNSS…TWSERSKTLE (89 aa)). 2 N-linked (GlcNAc...) asparagine glycosylation sites follow: Asn-34 and Asn-90. Cys-49 and Cys-99 are disulfide-bonded. The chain crosses the membrane as a helical span at residues 145–165 (IFTVVSVIFLLCLSALLFCFL). Residues 166 to 263 (RHRQKKQGLP…SSTYAAIIRH (98 aa)) lie on the Cytoplasmic side of the membrane. Short sequence motifs (ITIM motif) lie at residues 226–231 (VTYIQL) and 255–260 (STYAAI). Phosphotyrosine occurs at positions 228 and 257.

As to quaternary structure, interacts with SH2 domains of tyrosine-protein phosphatases PTPN6 and PTPN11. The interaction with PTPN6 is constitutive. Interacts with the SH2 domain of CSK. Binds with high affinity to extracellular matrix collagens, the interaction is functionally important. Phosphorylation at Tyr-228 and Tyr-257 activates it. May be phosphorylated by LCK. Post-translationally, N-glycosylated. As to expression, expressed in lymphoid organs and in cell lines of hemopoietic origin.

The protein localises to the cell membrane. In terms of biological role, functions as an inhibitory receptor that plays a constitutive negative regulatory role on cytolytic function of natural killer (NK) cells, B-cells and T-cells. Activation by Tyr phosphorylation results in recruitment and activation of the phosphatases PTPN6 and PTPN11. It also reduces the increase of intracellular calcium evoked by B-cell receptor ligation. May also play its inhibitory role independently of SH2-containing phosphatases. Modulates cytokine production in CD4+ T-cells, down-regulating IL2 and IFNG production while inducing secretion of transforming growth factor beta. Also down-regulates IgG and IgE production in B-cells as well as IL8, IL10 and TNF secretion. Inhibits proliferation and induces apoptosis in myeloid leukemia cell lines as well as prevents nuclear translocation of NF-kappa-B p65 subunit/RELA and phosphorylation of I-kappa-B alpha/CHUK in these cells. Inhibits the differentiation of peripheral blood precursors towards dendritic cells. This Mus musculus (Mouse) protein is Leukocyte-associated immunoglobulin-like receptor 1 (Lair1).